Here is a 765-residue protein sequence, read N- to C-terminus: Phosphoribosylformylglycinamidine synthase subunit PurL (765 aa).

Histidine 59 is an active-site residue. 2 residues coordinate ATP: tyrosine 62 and lysine 104. Glutamate 106 contacts Mg(2+). Substrate is bound by residues 107-110 (SHNH) and arginine 129. Histidine 108 acts as the Proton acceptor in catalysis. Aspartate 130 lines the Mg(2+) pocket. Glutamine 254 contacts substrate. Aspartate 282 is a binding site for Mg(2+). 326 to 328 (ESQ) serves as a coordination point for substrate. 2 residues coordinate ATP: asparagine 522 and glycine 559. A Mg(2+)-binding site is contributed by asparagine 560. Serine 562 is a substrate binding site.

It belongs to the FGAMS family. As to quaternary structure, monomer. Part of the FGAM synthase complex composed of 1 PurL, 1 PurQ and 2 PurS subunits.

It localises to the cytoplasm. It carries out the reaction N(2)-formyl-N(1)-(5-phospho-beta-D-ribosyl)glycinamide + L-glutamine + ATP + H2O = 2-formamido-N(1)-(5-O-phospho-beta-D-ribosyl)acetamidine + L-glutamate + ADP + phosphate + H(+). It functions in the pathway purine metabolism; IMP biosynthesis via de novo pathway; 5-amino-1-(5-phospho-D-ribosyl)imidazole from N(2)-formyl-N(1)-(5-phospho-D-ribosyl)glycinamide: step 1/2. Part of the phosphoribosylformylglycinamidine synthase complex involved in the purines biosynthetic pathway. Catalyzes the ATP-dependent conversion of formylglycinamide ribonucleotide (FGAR) and glutamine to yield formylglycinamidine ribonucleotide (FGAM) and glutamate. The FGAM synthase complex is composed of three subunits. PurQ produces an ammonia molecule by converting glutamine to glutamate. PurL transfers the ammonia molecule to FGAR to form FGAM in an ATP-dependent manner. PurS interacts with PurQ and PurL and is thought to assist in the transfer of the ammonia molecule from PurQ to PurL. This chain is Phosphoribosylformylglycinamidine synthase subunit PurL, found in Thermobifida fusca (strain YX).